Reading from the N-terminus, the 144-residue chain is D-aminoacyl-tRNA deacylase (144 aa).

The short motif at 136–137 is the Gly-cisPro motif, important for rejection of L-amino acids element; that stretch reads GP.

The protein belongs to the DTD family. In terms of assembly, homodimer.

The protein resides in the cytoplasm. The enzyme catalyses glycyl-tRNA(Ala) + H2O = tRNA(Ala) + glycine + H(+). It carries out the reaction a D-aminoacyl-tRNA + H2O = a tRNA + a D-alpha-amino acid + H(+). An aminoacyl-tRNA editing enzyme that deacylates mischarged D-aminoacyl-tRNAs. Also deacylates mischarged glycyl-tRNA(Ala), protecting cells against glycine mischarging by AlaRS. Acts via tRNA-based rather than protein-based catalysis; rejects L-amino acids rather than detecting D-amino acids in the active site. By recycling D-aminoacyl-tRNA to D-amino acids and free tRNA molecules, this enzyme counteracts the toxicity associated with the formation of D-aminoacyl-tRNA entities in vivo and helps enforce protein L-homochirality. This Vibrio vulnificus (strain CMCP6) protein is D-aminoacyl-tRNA deacylase.